We begin with the raw amino-acid sequence, 470 residues long: 6-phospho-beta-galactosidase 1 (470 aa).

Residues Gln23, His120, Asn163, Glu164, and Asn300 each coordinate D-galactose 6-phosphate. Glu164 acts as the Proton donor in catalysis. The active-site Nucleophile is the Glu378. Residues Ser434, Trp435, Lys441, and Tyr443 each contribute to the D-galactose 6-phosphate site.

It belongs to the glycosyl hydrolase 1 family.

It carries out the reaction a 6-phospho-beta-D-galactoside + H2O = D-galactose 6-phosphate + an alcohol. The protein operates within carbohydrate metabolism; lactose degradation; D-galactose 6-phosphate and beta-D-glucose from lactose 6-phosphate: step 1/1. The sequence is that of 6-phospho-beta-galactosidase 1 from Streptococcus pneumoniae serotype 4 (strain ATCC BAA-334 / TIGR4).